Consider the following 177-residue polypeptide: SPbeta prophage-derived uncharacterized protein YopI (177 aa).

A helical transmembrane segment spans residues 11–31; that stretch reads FEGIIGALLGVIVTLILTHIL.

It is found in the cell membrane. This is SPbeta prophage-derived uncharacterized protein YopI (yopI) from Bacillus subtilis (strain 168).